A 429-amino-acid chain; its full sequence is Glutamate-1-semialdehyde 2,1-aminomutase (429 aa).

Position 265 is an N6-(pyridoxal phosphate)lysine (Lys265).

Belongs to the class-III pyridoxal-phosphate-dependent aminotransferase family. HemL subfamily. Homodimer. The cofactor is pyridoxal 5'-phosphate.

The protein resides in the cytoplasm. It catalyses the reaction (S)-4-amino-5-oxopentanoate = 5-aminolevulinate. The protein operates within porphyrin-containing compound metabolism; protoporphyrin-IX biosynthesis; 5-aminolevulinate from L-glutamyl-tRNA(Glu): step 2/2. The polypeptide is Glutamate-1-semialdehyde 2,1-aminomutase (Shewanella pealeana (strain ATCC 700345 / ANG-SQ1)).